The sequence spans 256 residues: Thiazole synthase (256 aa).

The Schiff-base intermediate with DXP role is filled by lysine 95. Residues glycine 156, 182–183 (AG), and 204–205 (NT) each bind 1-deoxy-D-xylulose 5-phosphate.

This sequence belongs to the ThiG family. As to quaternary structure, homotetramer. Forms heterodimers with either ThiH or ThiS.

It localises to the cytoplasm. The catalysed reaction is [ThiS sulfur-carrier protein]-C-terminal-Gly-aminoethanethioate + 2-iminoacetate + 1-deoxy-D-xylulose 5-phosphate = [ThiS sulfur-carrier protein]-C-terminal Gly-Gly + 2-[(2R,5Z)-2-carboxy-4-methylthiazol-5(2H)-ylidene]ethyl phosphate + 2 H2O + H(+). The protein operates within cofactor biosynthesis; thiamine diphosphate biosynthesis. In terms of biological role, catalyzes the rearrangement of 1-deoxy-D-xylulose 5-phosphate (DXP) to produce the thiazole phosphate moiety of thiamine. Sulfur is provided by the thiocarboxylate moiety of the carrier protein ThiS. In vitro, sulfur can be provided by H(2)S. This Enterobacter sp. (strain 638) protein is Thiazole synthase.